Here is a 206-residue protein sequence, read N- to C-terminus: MARYLGPKLKLSRREGTDLFLKSGVRAIDSKCKLETAPGQHGARKTRLSEYGVQLREKQKVRRIYGVLEKQFRNYYKDAARTKGNTGENLLTLLETRLDNVVYRMGFGATRAESRQLVSHKSIMVNGSVVNIPSFKVSANDVVSVREKSRTQARIKAALEVSAQREKPTWVEVDNTKMEGAFKRIPERSDLSAEINEQLIVELYSK.

One can recognise an S4 RNA-binding domain in the interval 96–156; sequence TRLDNVVYRM…EKSRTQARIK (61 aa).

It belongs to the universal ribosomal protein uS4 family. As to quaternary structure, part of the 30S ribosomal subunit. Contacts protein S5. The interaction surface between S4 and S5 is involved in control of translational fidelity.

Functionally, one of the primary rRNA binding proteins, it binds directly to 16S rRNA where it nucleates assembly of the body of the 30S subunit. Its function is as follows. With S5 and S12 plays an important role in translational accuracy. In Shewanella halifaxensis (strain HAW-EB4), this protein is Small ribosomal subunit protein uS4.